The primary structure comprises 505 residues: ATP synthase subunit alpha (505 aa).

171–178 (GDRQTGKT) serves as a coordination point for ATP.

This sequence belongs to the ATPase alpha/beta chains family. As to quaternary structure, F-type ATPases have 2 components, CF(1) - the catalytic core - and CF(0) - the membrane proton channel. CF(1) has five subunits: alpha(3), beta(3), gamma(1), delta(1), epsilon(1). CF(0) has three main subunits: a(1), b(2) and c(9-12). The alpha and beta chains form an alternating ring which encloses part of the gamma chain. CF(1) is attached to CF(0) by a central stalk formed by the gamma and epsilon chains, while a peripheral stalk is formed by the delta and b chains.

It is found in the cell inner membrane. It catalyses the reaction ATP + H2O + 4 H(+)(in) = ADP + phosphate + 5 H(+)(out). Its function is as follows. Produces ATP from ADP in the presence of a proton gradient across the membrane. The alpha chain is a regulatory subunit. The chain is ATP synthase subunit alpha from Aliarcobacter butzleri (strain RM4018) (Arcobacter butzleri).